Consider the following 1121-residue polypeptide: Cilia- and flagella-associated protein 70 (1121 aa).

A compositionally biased stretch (basic and acidic residues) spans 410 to 428 (NLKEDKPVKEKDIDGRPRP). Residues 410-457 (NLKEDKPVKEKDIDGRPRPGDVQAPSIKSQSSDTPLEGEPPLSHNPEG) form a disordered region. TPR repeat units follow at residues 635–668 (SEQL…EPQN), 669–702 (LDHW…NQSH), and 704–736 (HSLL…EPTN). Disordered regions lie at residues 778–802 (KQKS…PWGI) and 836–858 (QSDS…QKPS). 5 TPR repeats span residues 929-962 (CEYY…DYLN), 963-996 (PNVW…VVDA), 1000-1033 (HFIF…SPSC), 1035-1066 (TWLG…NNYN), and 1068-1100 (EVWA…KLKD).

The protein belongs to the CFAP70 family. As to expression, expressed in testis.

It is found in the cell projection. The protein localises to the cilium. The protein resides in the flagellum. Its subcellular location is the cytoplasm. It localises to the cytoskeleton. It is found in the flagellum basal body. The protein localises to the cilium axoneme. Its function is as follows. Axoneme-binding protein that plays a role in the regulation of ciliary motility and cilium length. This is Cilia- and flagella-associated protein 70 from Homo sapiens (Human).